Consider the following 280-residue polypeptide: Pantothenate synthetase (280 aa).

31-38 serves as a coordination point for ATP; the sequence is MGNLHVGH. His38 acts as the Proton donor in catalysis. Gln62 contributes to the (R)-pantoate binding site. Gln62 provides a ligand contact to beta-alanine. Position 150 to 153 (150 to 153) interacts with ATP; sequence GKKD. Position 156 (Gln156) interacts with (R)-pantoate. Residues Val179 and 187–190 contribute to the ATP site; that span reads MSSR.

The protein belongs to the pantothenate synthetase family. As to quaternary structure, homodimer.

It localises to the cytoplasm. It carries out the reaction (R)-pantoate + beta-alanine + ATP = (R)-pantothenate + AMP + diphosphate + H(+). The protein operates within cofactor biosynthesis; (R)-pantothenate biosynthesis; (R)-pantothenate from (R)-pantoate and beta-alanine: step 1/1. In terms of biological role, catalyzes the condensation of pantoate with beta-alanine in an ATP-dependent reaction via a pantoyl-adenylate intermediate. In Xanthomonas oryzae pv. oryzae (strain MAFF 311018), this protein is Pantothenate synthetase.